The following is a 186-amino-acid chain: Ribosome-recycling factor (186 aa).

Belongs to the RRF family.

Its subcellular location is the cytoplasm. Its function is as follows. Responsible for the release of ribosomes from messenger RNA at the termination of protein biosynthesis. May increase the efficiency of translation by recycling ribosomes from one round of translation to another. This chain is Ribosome-recycling factor, found in Beijerinckia indica subsp. indica (strain ATCC 9039 / DSM 1715 / NCIMB 8712).